Consider the following 179-residue polypeptide: MSRVGKSIIKLPAKVEVKADAEALTIKGPLGELKTPIYEGVSANVENGELVFTRKSEDQKTVALHGLVRSLAMNCVKGVTSGWEKNLEITGVGYRAQKRGKDLVMALGYSHEVVFPEPNGIKIEVADQLKIKVSGIDRQLVGQVAADIRSKRPPEPYKGKGIKYQNEYIRRKAGKTGKK.

Belongs to the universal ribosomal protein uL6 family. In terms of assembly, part of the 50S ribosomal subunit.

This protein binds to the 23S rRNA, and is important in its secondary structure. It is located near the subunit interface in the base of the L7/L12 stalk, and near the tRNA binding site of the peptidyltransferase center. The protein is Large ribosomal subunit protein uL6 of Leptospira biflexa serovar Patoc (strain Patoc 1 / ATCC 23582 / Paris).